A 146-amino-acid chain; its full sequence is Small ribosomal subunit protein uS5 (146 aa).

The region spanning 8 to 71 (FEESIVNIGR…DNAFKNLSKV (64 aa)) is the S5 DRBM domain.

This sequence belongs to the universal ribosomal protein uS5 family. In terms of assembly, part of the 30S ribosomal subunit. Contacts proteins S4 and S8.

Functionally, with S4 and S12 plays an important role in translational accuracy. In terms of biological role, located at the back of the 30S subunit body where it stabilizes the conformation of the head with respect to the body. The chain is Small ribosomal subunit protein uS5 from Sulfurimonas denitrificans (strain ATCC 33889 / DSM 1251) (Thiomicrospira denitrificans (strain ATCC 33889 / DSM 1251)).